The following is a 100-amino-acid chain: Urease subunit gamma (100 aa).

The protein belongs to the urease gamma subunit family. As to quaternary structure, heterotrimer of UreA (gamma), UreB (beta) and UreC (alpha) subunits. Three heterotrimers associate to form the active enzyme.

Its subcellular location is the cytoplasm. The catalysed reaction is urea + 2 H2O + H(+) = hydrogencarbonate + 2 NH4(+). It participates in nitrogen metabolism; urea degradation; CO(2) and NH(3) from urea (urease route): step 1/1. This Burkholderia mallei (strain NCTC 10247) protein is Urease subunit gamma.